Reading from the N-terminus, the 708-residue chain is MARKTPLKRYRNIGISAHIDAGKTTTTERVLFYTGVSHKIGEVHDGAATMDWMEQEQERGITITSAATTCFWSGMAKQFDEHRINIIDTPGHVDFTIEVERSMRVLDGACMVYCAVGGVQPQSETVWRQANKYKVPRLAFINKMDRVGADFYRVVEQIKTRLGGKPVPLVIPIGKEDDFEGVVDLVTMKAIYWDEASQGMEYDEREIPAELQEKAEEYREYLVESAAEATEELMNEYLENGELTVDQINSAIRQLTIDNEIIPLLCGTAFKNKGVQKMLDAVIQYLPAPMDVPAIKGILDDKDESEGTREASDEAPFSALAFKIMNDKFVGNLTFVRVYSGVLKQGSSVYNPVKMKRERVGRIVQMMANSQEELQEIRTGDIAALVGMKDVTTGDTLCDEQNVITLERMEFPDPVISLAVEPKTKADQEKMSIALGRLAKEDPSFRVHTDEESGQTIISGMGELHLEILVDRMKREFGVEANIGAPQVAYRETIRNTVEQEGKFVRQTGGRGKFGHVWLRLEPMDPAGDVLYEFKEEVVGGTVPKEFHGAVDKGIQERMKNGVLAGYPIVGVKATLYDGSYHDVDSDELSFKMAGSIAFRKGFMAANPTLLEPVMKVEVETPEDYMGDIMGDLNRRRGMVQGMEDLPGGTKQIRAEVPLAEMFGYATQMRSMSQGRATYSMEFQKYAEIPKSVAEAIISKFNNKDDDE.

Positions 8–290 constitute a tr-type G domain; the sequence is KRYRNIGISA…AVIQYLPAPM (283 aa). GTP is bound by residues 17–24, 88–92, and 142–145; these read AHIDAGKT, DTPGH, and NKMD.

The protein belongs to the TRAFAC class translation factor GTPase superfamily. Classic translation factor GTPase family. EF-G/EF-2 subfamily.

It is found in the cytoplasm. Functionally, catalyzes the GTP-dependent ribosomal translocation step during translation elongation. During this step, the ribosome changes from the pre-translocational (PRE) to the post-translocational (POST) state as the newly formed A-site-bound peptidyl-tRNA and P-site-bound deacylated tRNA move to the P and E sites, respectively. Catalyzes the coordinated movement of the two tRNA molecules, the mRNA and conformational changes in the ribosome. The sequence is that of Elongation factor G from Psychrobacter cryohalolentis (strain ATCC BAA-1226 / DSM 17306 / VKM B-2378 / K5).